The chain runs to 340 residues: DNA-directed RNA polymerase subunit alpha (340 aa).

The alpha N-terminal domain (alpha-NTD) stretch occupies residues 1 to 233 (MVREEVAVST…DLFIPFLHAE (233 aa)). Positions 266 to 340 (KKEIALKCIF…GIDLPKNKRF (75 aa)) are alpha C-terminal domain (alpha-CTD).

It belongs to the RNA polymerase alpha chain family. In terms of assembly, in plastids the minimal PEP RNA polymerase catalytic core is composed of four subunits: alpha, beta, beta', and beta''. When a (nuclear-encoded) sigma factor is associated with the core the holoenzyme is formed, which can initiate transcription.

Its subcellular location is the plastid. It is found in the chloroplast. The enzyme catalyses RNA(n) + a ribonucleoside 5'-triphosphate = RNA(n+1) + diphosphate. DNA-dependent RNA polymerase catalyzes the transcription of DNA into RNA using the four ribonucleoside triphosphates as substrates. In Calycanthus floridus var. glaucus (Eastern sweetshrub), this protein is DNA-directed RNA polymerase subunit alpha.